We begin with the raw amino-acid sequence, 417 residues long: MDKLVIEGGVPLTGSIEVSGSKNAALPILFAAILPEEPVTITNVPDLRDIHTTLNLLKVLGCDCQYENGQVRIVPGSLLPEAPYDLVRTMRASVLCLGPLLARIGQARVALPGGCAIGARPVDQHLKGLEQMGASFQLEEGYIIGRCRKLTGAHITFDMPTVGGTENLLMAAVLAEGKTVLENVALEPEVVDLANFLCACGARISGQGTSCIRIEGVTSLHQATYPVMPDRIEAGTFLAAAGITGGELLLHNCPYDELESVILKLRSMGMEITQQGSGVLARCCAAPLRGTDVKTQPYPGFPTDMQAQIMALMCLAQGASVVEESIFENRFMHVLELMRMGAQIKVSGHTAMVRGVQKLTGAPVMASDLRASASLVLAGLAAQGVTEVRRIYHLDRGYEHIEHKLNAVGARIRREKQ.

22–23 (KN) is a phosphoenolpyruvate binding site. A UDP-N-acetyl-alpha-D-glucosamine-binding site is contributed by Arg-91. Cys-115 serves as the catalytic Proton donor. 2-(S-cysteinyl)pyruvic acid O-phosphothioketal is present on Cys-115. UDP-N-acetyl-alpha-D-glucosamine-binding positions include 120–124 (RPVDQ), Asp-304, and Ile-326.

Belongs to the EPSP synthase family. MurA subfamily.

It localises to the cytoplasm. It catalyses the reaction phosphoenolpyruvate + UDP-N-acetyl-alpha-D-glucosamine = UDP-N-acetyl-3-O-(1-carboxyvinyl)-alpha-D-glucosamine + phosphate. Its pathway is cell wall biogenesis; peptidoglycan biosynthesis. Functionally, cell wall formation. Adds enolpyruvyl to UDP-N-acetylglucosamine. The protein is UDP-N-acetylglucosamine 1-carboxyvinyltransferase of Desulfovibrio desulfuricans (strain ATCC 27774 / DSM 6949 / MB).